The following is a 182-amino-acid chain: MLQPPKVLLLYAHPESQDSVANRVLLQPVQQLEHVTVHDLYAHYPDFFIDIHHEQQLLRDHQVIVFQHPLYTYSCPALLKEWLDRVLARGFANGVGGHALTGKHWRSVITTGEQEGTYRIGGYNRYPMEDILRPFELTAAMCHMHWINPMIIYWARRQKPETLASHAQAYVQWLQSPLTRGL.

Belongs to the NAD(P)H dehydrogenase (quinone) family. KefG subfamily. In terms of assembly, interacts with KefB.

Its subcellular location is the cell inner membrane. The catalysed reaction is a quinone + NADH + H(+) = a quinol + NAD(+). It catalyses the reaction a quinone + NADPH + H(+) = a quinol + NADP(+). In terms of biological role, regulatory subunit of a potassium efflux system that confers protection against electrophiles. Required for full activity of KefB. This chain is Glutathione-regulated potassium-efflux system ancillary protein KefG, found in Yersinia pestis bv. Antiqua (strain Nepal516).